The primary structure comprises 208 residues: Adenylyl-sulfate kinase 3 (208 aa).

37-45 (GLSGSGKST) contacts ATP. Substrate is bound by residues D67, R70, R84, N87, 110 to 111 (IS), and G160. S111 serves as the catalytic Phosphoserine intermediate.

The protein belongs to the APS kinase family. As to expression, expressed in root vasculature, root tips, leaf epidermal and guard cells, pollen grains and radicle of immature seeds.

It is found in the cytoplasm. It localises to the cytosol. It catalyses the reaction adenosine 5'-phosphosulfate + ATP = 3'-phosphoadenylyl sulfate + ADP + H(+). It functions in the pathway sulfur metabolism; hydrogen sulfide biosynthesis; sulfite from sulfate: step 2/3. Functionally, catalyzes the synthesis of activated sulfate for the sulfation of secondary metabolites, including the glucosinolates. Essential for plant reproduction and viability. In Arabidopsis thaliana (Mouse-ear cress), this protein is Adenylyl-sulfate kinase 3.